A 148-amino-acid polypeptide reads, in one-letter code: Cuticle protein 8 (148 aa).

5 tandem repeats follow at residues 16 to 19 (AAPA), alanine 22, 28 to 31 (AAPV), 37 to 40 (AAPA), and 44 to 47 (AAPV). The Chitin-binding type R&amp;R domain maps to 58–128 (YPKYEFNYGV…RTPGTHPVAV (71 aa)).

Functionally, component of the cuticle of migratory locust which contains more than 100 different structural proteins. The sequence is that of Cuticle protein 8 from Locusta migratoria (Migratory locust).